A 333-amino-acid polypeptide reads, in one-letter code: Ribosomal protein L11 methyltransferase (333 aa).

The S-adenosyl-L-methionine site is built by Thr160, Gly181, Asp203, and Asn267.

Belongs to the methyltransferase superfamily. PrmA family.

Its subcellular location is the cytoplasm. The enzyme catalyses L-lysyl-[protein] + 3 S-adenosyl-L-methionine = N(6),N(6),N(6)-trimethyl-L-lysyl-[protein] + 3 S-adenosyl-L-homocysteine + 3 H(+). Its function is as follows. Methylates ribosomal protein L11. The sequence is that of Ribosomal protein L11 methyltransferase from Lachnoclostridium phytofermentans (strain ATCC 700394 / DSM 18823 / ISDg) (Clostridium phytofermentans).